The sequence spans 108 residues: Putative septation protein SpoVG (108 aa).

The protein belongs to the SpoVG family.

In terms of biological role, could be involved in septation. The chain is Putative septation protein SpoVG from Bdellovibrio bacteriovorus (strain ATCC 15356 / DSM 50701 / NCIMB 9529 / HD100).